Reading from the N-terminus, the 395-residue chain is S-adenosylmethionine synthase (395 aa).

ATP is bound at residue H16. A Mg(2+)-binding site is contributed by D18. A K(+)-binding site is contributed by E44. L-methionine-binding residues include E57 and Q100. The segment at 100 to 110 (QSPDIAQGVDR) is flexible loop. ATP is bound by residues 167-169 (DAK), 233-234 (RF), D242, 248-249 (RK), A265, and K269. D242 serves as a coordination point for L-methionine. K273 lines the L-methionine pocket.

This sequence belongs to the AdoMet synthase family. In terms of assembly, homotetramer; dimer of dimers. Requires Mg(2+) as cofactor. The cofactor is K(+).

The protein resides in the cytoplasm. The enzyme catalyses L-methionine + ATP + H2O = S-adenosyl-L-methionine + phosphate + diphosphate. It participates in amino-acid biosynthesis; S-adenosyl-L-methionine biosynthesis; S-adenosyl-L-methionine from L-methionine: step 1/1. In terms of biological role, catalyzes the formation of S-adenosylmethionine (AdoMet) from methionine and ATP. The overall synthetic reaction is composed of two sequential steps, AdoMet formation and the subsequent tripolyphosphate hydrolysis which occurs prior to release of AdoMet from the enzyme. The sequence is that of S-adenosylmethionine synthase from Burkholderia cenocepacia (strain HI2424).